The primary structure comprises 51 residues: uncharacterized protein (51 aa).

To E.coli YdaF.

This is an uncharacterized protein from Escherichia coli O157:H7.